We begin with the raw amino-acid sequence, 284 residues long: 4-diphosphocytidyl-2-C-methyl-D-erythritol kinase (284 aa).

Lysine 14 is an active-site residue. ATP is bound at residue 98-108 (PMGGGLGGGSS). The active site involves aspartate 140.

This sequence belongs to the GHMP kinase family. IspE subfamily.

It catalyses the reaction 4-CDP-2-C-methyl-D-erythritol + ATP = 4-CDP-2-C-methyl-D-erythritol 2-phosphate + ADP + H(+). Its pathway is isoprenoid biosynthesis; isopentenyl diphosphate biosynthesis via DXP pathway; isopentenyl diphosphate from 1-deoxy-D-xylulose 5-phosphate: step 3/6. Its function is as follows. Catalyzes the phosphorylation of the position 2 hydroxy group of 4-diphosphocytidyl-2C-methyl-D-erythritol. The sequence is that of 4-diphosphocytidyl-2-C-methyl-D-erythritol kinase from Shewanella baltica (strain OS195).